We begin with the raw amino-acid sequence, 392 residues long: Tryptophan synthase beta chain (392 aa).

Position 86 is an N6-(pyridoxal phosphate)lysine (lysine 86).

Belongs to the TrpB family. As to quaternary structure, tetramer of two alpha and two beta chains. Pyridoxal 5'-phosphate serves as cofactor.

It catalyses the reaction (1S,2R)-1-C-(indol-3-yl)glycerol 3-phosphate + L-serine = D-glyceraldehyde 3-phosphate + L-tryptophan + H2O. Its pathway is amino-acid biosynthesis; L-tryptophan biosynthesis; L-tryptophan from chorismate: step 5/5. Functionally, the beta subunit is responsible for the synthesis of L-tryptophan from indole and L-serine. This chain is Tryptophan synthase beta chain (trpB), found in Buchnera aphidicola subsp. Melaphis rhois.